A 262-amino-acid chain; its full sequence is MYIFKIAYDGKLSFQTQPHGETVCDKISNALLDCGYLDNKDRVPLYHGGRTDRGVAALGNYVVYEMDKKPVLPRVQSKLKWDGIWVLGCKKIEIFPEIEHRHYQYTLPNKNHDVELMKKASEKLIGTHYFQNLSKRDKTKVKDPVRTLYDIKISSNDYFITIDIFGESFLWNMVRRIIRLLSDIGKHKIENPEKFIELILSEDYKKGYPPSPAEGLILVDVKTNIDIDLDSYVIRNLKNSWEKSLNNSLMRLGLCKTVLSKT.

Catalysis depends on Asp-52, which acts as the Nucleophile. A substrate-binding site is contributed by Tyr-103.

The protein belongs to the tRNA pseudouridine synthase TruA family.

The enzyme catalyses uridine(38/39/40) in tRNA = pseudouridine(38/39/40) in tRNA. Its function is as follows. Formation of pseudouridine at positions 38, 39 and 40 in the anticodon stem and loop of transfer RNAs. The sequence is that of tRNA pseudouridine synthase A from Methanococcus maripaludis (strain DSM 14266 / JCM 13030 / NBRC 101832 / S2 / LL).